We begin with the raw amino-acid sequence, 242 residues long: Mitochondrial inner membrane protease ATP23 (242 aa).

A divalent metal cation is bound at residue His-142. Glu-143 is a catalytic residue. Residue His-146 coordinates a divalent metal cation.

It belongs to the peptidase M76 family.

Its subcellular location is the mitochondrion inner membrane. Its function is as follows. Has a dual role in the assembly of mitochondrial ATPase. Acts as a protease that removes N-terminal residues of mitochondrial ATPase CF(0) subunit 6 at the intermembrane space side. Also involved in the correct assembly of the membrane-embedded ATPase CF(0) particle, probably mediating association of subunit 6 with the subunit 9 ring. The chain is Mitochondrial inner membrane protease ATP23 (ATP23) from Meyerozyma guilliermondii (strain ATCC 6260 / CBS 566 / DSM 6381 / JCM 1539 / NBRC 10279 / NRRL Y-324) (Yeast).